We begin with the raw amino-acid sequence, 189 residues long: Interferon alpha-H (189 aa).

Residues 1–23 (MAPAWSFLLALLLLSCNAICSLG) form the signal peptide. Disulfide bonds link Cys-24–Cys-122 and Cys-52–Cys-162.

The protein belongs to the alpha/beta interferon family.

It is found in the secreted. In terms of biological role, produced by macrophages, IFN-alpha have antiviral activities. Interferon stimulates the production of two enzymes: a protein kinase and an oligoadenylate synthetase. The protein is Interferon alpha-H (IFNAH) of Bos taurus (Bovine).